Consider the following 200-residue polypeptide: Transgelin (200 aa).

At A2 the chain carries N-acetylalanine. The 114-residue stretch at 24 to 137 folds into the Calponin-homology (CH) domain; the sequence is DELEDRLVEW…RTLVALGSLA (114 aa). The Calponin-like repeat unit spans residues 175–199; sequence IGLQMGTNKGASQAGMSYGRPRQII.

It belongs to the calponin family. In terms of assembly, monomer. As to expression, gizzard, uterus, intestine, esophagus, aorta, and trace amounts in brain, liver and heart.

Its subcellular location is the cytoplasm. Actin cross-linking/gelling protein. In Gallus gallus (Chicken), this protein is Transgelin (TAGLN).